The chain runs to 400 residues: Enoyl-[acyl-carrier-protein] reductase [NADH] (400 aa).

NAD(+)-binding positions include 48-53 (GASTGY), 74-75 (FE), 111-112 (DA), and 139-140 (LA). Tyr225 is a binding site for substrate. Catalysis depends on Tyr235, which acts as the Proton donor. Residues Lys244 and 273-275 (VVT) each bind NAD(+).

The protein belongs to the TER reductase family. In terms of assembly, monomer.

The catalysed reaction is a 2,3-saturated acyl-[ACP] + NAD(+) = a (2E)-enoyl-[ACP] + NADH + H(+). Its pathway is lipid metabolism; fatty acid biosynthesis. Involved in the final reduction of the elongation cycle of fatty acid synthesis (FAS II). Catalyzes the reduction of a carbon-carbon double bond in an enoyl moiety that is covalently linked to an acyl carrier protein (ACP). The protein is Enoyl-[acyl-carrier-protein] reductase [NADH] of Burkholderia cenocepacia (strain HI2424).